The sequence spans 575 residues: Triokinase/FMN cyclase (575 aa).

The DhaK domain occupies 9 to 336 (SVAGCADDAL…IDAETTAAAW (328 aa)). Residues 56–59 (GSGH), K109, and D114 each bind dihydroxyacetone. H221 (tele-hemiaminal-histidine intermediate) is an active-site residue. The disordered stretch occupies residues 348-367 (KRSRVAPAEPQEAPDSTAAG). Residue S350 is modified to Phosphoserine. Positions 372–571 (KRMALVLERV…AAAILRAILE (200 aa)) constitute a DhaL domain. ATP is bound by residues 401–404 (DGDC), 446–447 (SS), G486, and 494–495 (TM). A phosphoserine mark is found at S511 and S545. Residue 556 to 558 (DPG) coordinates ATP.

The protein belongs to the dihydroxyacetone kinase (DAK) family. As to quaternary structure, homodimer. Interacts with IFIH1 (via the CARD domains), the interaction is inhibited by viral infection. Mg(2+) serves as cofactor. It depends on Mn(2+) as a cofactor. Co(2+) is required as a cofactor. Detected in erythrocytes (at protein level).

The catalysed reaction is dihydroxyacetone + ATP = dihydroxyacetone phosphate + ADP + H(+). It catalyses the reaction D-glyceraldehyde + ATP = D-glyceraldehyde 3-phosphate + ADP + H(+). The enzyme catalyses FAD = riboflavin cyclic-4',5'-phosphate + AMP + H(+). Its activity is regulated as follows. Each activity is inhibited by the substrate(s) of the other. Functionally, catalyzes both the phosphorylation of dihydroxyacetone and of glyceraldehyde, and the splitting of ribonucleoside diphosphate-X compounds among which FAD is the best substrate. Represses IFIH1-mediated cellular antiviral response. The polypeptide is Triokinase/FMN cyclase (Homo sapiens (Human)).